A 752-amino-acid polypeptide reads, in one-letter code: F-box and WD repeat domain containing protein 10B (752 aa).

WD repeat units lie at residues glycine 169 to proline 206, glycine 451 to isoleucine 490, glycine 493 to arginine 532, lysine 534 to threonine 569, glycine 572 to leucine 609, and alanine 611 to lysine 652.

Expressed in pancreas, heart and skeletal muscle.

The protein is F-box and WD repeat domain containing protein 10B of Homo sapiens (Human).